We begin with the raw amino-acid sequence, 227 residues long: ATP-dependent dethiobiotin synthetase BioD (227 aa).

13 to 18 (DIGKTY) provides a ligand contact to ATP. Thr-17 contacts Mg(2+). Lys-38 is an active-site residue. Ser-42 lines the substrate pocket. Residues Asp-55, 116-119 (EGSG), and 179-180 (NN) contribute to the ATP site. Residues Asp-55 and Glu-116 each contribute to the Mg(2+) site.

This sequence belongs to the dethiobiotin synthetase family. As to quaternary structure, homodimer. The cofactor is Mg(2+).

Its subcellular location is the cytoplasm. The enzyme catalyses (7R,8S)-7,8-diammoniononanoate + CO2 + ATP = (4R,5S)-dethiobiotin + ADP + phosphate + 3 H(+). Its pathway is cofactor biosynthesis; biotin biosynthesis; biotin from 7,8-diaminononanoate: step 1/2. Catalyzes a mechanistically unusual reaction, the ATP-dependent insertion of CO2 between the N7 and N8 nitrogen atoms of 7,8-diaminopelargonic acid (DAPA, also called 7,8-diammoniononanoate) to form a ureido ring. The sequence is that of ATP-dependent dethiobiotin synthetase BioD from Clostridium botulinum (strain Alaska E43 / Type E3).